The sequence spans 245 residues: Small ribosomal subunit protein uS2 (245 aa).

This sequence belongs to the universal ribosomal protein uS2 family.

The protein is Small ribosomal subunit protein uS2 of Pseudomonas putida (strain W619).